The sequence spans 111 residues: C-type lectin lectoxin-Enh2 (111 aa).

A signal peptide spans 1 to 23; it reads MGQFTVVSLGLLAMFLSLSGAKG. The cysteines at positions 26 and 37 are disulfide-linked. The C-type lectin domain occupies 33–108; it reads RNGVCNKLFP…CASLHPFICQ (76 aa). The Mannose-binding signature appears at 72-74; it reads EPN. Ca(2+) contacts are provided by Glu80, Asn95, and Asp96. Residues Cys82 and Cys99 are joined by a disulfide bond.

This sequence belongs to the true venom lectin family. In terms of tissue distribution, expressed by the venom gland.

The protein localises to the secreted. In terms of biological role, mannose-binding lectin which recognizes specific carbohydrate structures and agglutinates a variety of animal cells by binding to cell-surface glycoproteins and glycolipids. May be a calcium-dependent lectin. This chain is C-type lectin lectoxin-Enh2, found in Pseudoferania polylepis (Macleay's water snake).